The sequence spans 64 residues: Large ribosomal subunit protein bL35 (64 aa).

The span at 1-14 (MKNKTHKGTAKRVK) shows a compositional bias: basic residues. The tract at residues 1–29 (MKNKTHKGTAKRVKVTGSGKLVREQANRR) is disordered.

It belongs to the bacterial ribosomal protein bL35 family.

In Corynebacterium glutamicum (strain R), this protein is Large ribosomal subunit protein bL35.